The chain runs to 456 residues: Toxin CfTX-1 (456 aa).

The N-terminal stretch at 1–20 is a signal peptide; the sequence is MVKMLFFAFLPLLFMTGIAA.

Belongs to the jellyfish toxin family. Type I subfamily. Oligomer. In terms of processing, contains disulfide bonds. Nematocytes.

Its subcellular location is the secreted. It localises to the nematocyst. The protein resides in the target cell membrane. May cause profound effects on the cardiovascular system of anesthetized rats (at 25 ug/kg), since the fraction containing this toxin and CfTX-2 produces an initial increase in mean arterial pressure, followed by cardiovascular collapse in all animals within 1 minute of injection. To note, the same fraction does not induce significant change in heart rate. Has weak hemolytic activity. Is lethal to crayfish. Causes cutaneous inflammation in humans. May act as a pore-forming toxin, disrupting normal transmembrane ion concentration gradients in susceptible cells. The sequence is that of Toxin CfTX-1 from Chironex fleckeri (Australian box jellyfish).